The sequence spans 107 residues: Translation initiation factor IF-1, chloroplastic (107 aa).

The region spanning 8-83 (REKKNPREAK…SKGRIIYRLP (76 aa)) is the S1-like domain.

The protein belongs to the IF-1 family. Component of the 30S ribosomal translation pre-initiation complex which assembles on the 30S ribosome in the order IF-2 and IF-3, IF-1 and N-formylmethionyl-tRNA(fMet); mRNA recruitment can occur at any time during PIC assembly.

It localises to the plastid. The protein localises to the chloroplast. One of the essential components for the initiation of protein synthesis. Stabilizes the binding of IF-2 and IF-3 on the 30S subunit to which N-formylmethionyl-tRNA(fMet) subsequently binds. Helps modulate mRNA selection, yielding the 30S pre-initiation complex (PIC). Upon addition of the 50S ribosomal subunit IF-1, IF-2 and IF-3 are released leaving the mature 70S translation initiation complex. This is Translation initiation factor IF-1, chloroplastic from Lolium perenne (Perennial ryegrass).